The primary structure comprises 580 residues: Glutathione hydrolase proenzyme (580 aa).

A signal peptide spans 1–25 (MIKPTFLRRVAIAALLSGSCFSAAA). Arginine 114 contributes to the L-glutamate binding site. Catalysis depends on threonine 391, which acts as the Nucleophile. Residues threonine 409, asparagine 411, glutamine 430, aspartate 433, 462 to 463 (SS), and 483 to 484 (GG) contribute to the L-glutamate site. Residues 561–580 (DGELYGASDPRSVDDLTAGY) form a disordered region.

It belongs to the gamma-glutamyltransferase family. This enzyme consists of two polypeptide chains, which are synthesized in precursor form from a single polypeptide. Cleaved by autocatalysis into a large and a small subunit.

The protein localises to the periplasm. The enzyme catalyses an N-terminal (5-L-glutamyl)-[peptide] + an alpha-amino acid = 5-L-glutamyl amino acid + an N-terminal L-alpha-aminoacyl-[peptide]. It carries out the reaction glutathione + H2O = L-cysteinylglycine + L-glutamate. It catalyses the reaction an S-substituted glutathione + H2O = an S-substituted L-cysteinylglycine + L-glutamate. Its pathway is sulfur metabolism; glutathione metabolism. Its activity is regulated as follows. Transferase and hydrolase activities are inhibited by L-Ala and L-Gln, and also by GGT affinity labeling reagents such as azaserine and 6-diazo-5-oxo-nor-leucine. Functionally, cleaves the gamma-glutamyl bond of periplasmic glutathione (gamma-Glu-Cys-Gly), glutathione conjugates, and other gamma-glutamyl compounds. The metabolism of glutathione releases free glutamate and the dipeptide cysteinyl-glycine, which is hydrolyzed to cysteine and glycine by dipeptidases; it may function in amino acid uptake/salvage, or possibly in peptidoglycan linkage. Catalyzes the hydrolysis and transpeptidation of many gamma-glutamyl compounds (including some D-gamma-glutamyl substrates), with a preference for basic and aromatic amino acids as acceptors. The KM values for gamma-glutamyl acceptors are so high that it has been proposed transpeptidation is not the physiological role in E.coli. The protein is Glutathione hydrolase proenzyme (ggt) of Escherichia coli (strain K12).